The primary structure comprises 359 residues: Endoglucanase 1 (359 aa).

Disordered regions lie at residues 1–26 (MENPRTTPTPTPLRRRRSERRARGGR) and 47–72 (TGASPSPAPPASPAPSADSGTADAGT). Positions 13–24 (LRRRRSERRARG) are enriched in basic residues. Over residues 60 to 72 (APSADSGTADAGT) the composition is skewed to low complexity. Residue D154 is part of the active site. C155 and C199 form a disulfide bridge. The Proton donor role is filled by D192. D339 acts as the Nucleophile in catalysis.

This sequence belongs to the glycosyl hydrolase 6 (cellulase B) family.

The catalysed reaction is Endohydrolysis of (1-&gt;4)-beta-D-glucosidic linkages in cellulose, lichenin and cereal beta-D-glucans.. CMCase I preferentially hydrolyzes carboxymethyl cellulose (CMC). This chain is Endoglucanase 1 (casA), found in Streptomyces sp. (strain KSM-9).